An 869-amino-acid polypeptide reads, in one-letter code: MEGGKGEGKRMKEEAPSKKLPPKIYGGDAGTPTKAAHDEILSSLLRINNFDSISSIKDESLDIDLSACVTISSASLVNGNSLSSTDFWRVLDESAQNNTELNLSSDVCRDDLAATSSSTVPSTLTSDNHSSSEFSVTFLRPEPPNAFTNSPFKKTSSSGTSTPVKLSPEQLHQQHQLQMPQSQLLQRKPKLPAATAVRLKVFKEEPPEEKHPPEQVVTKVEVCESELLPPSFTIFQQAKSAESVADAASMPPPAASETKPLEVDPAPLHKCLDCNGLLLETPDEVAKHEAAAHRLRLTYRCSECQREFELLAGLKKHLKTHRTEGRKDTWKKCPDCGKCLKLGSMWMHRKIHSDNKKYQCDICGQKFVQKINLTHHARIHSSEKPYECPECQKRFQERSHLQRHQKYHAQTRSYRCEKCGKMYKTERCLKVHNLVHLEQRPFACTVCDKSFISNSKLKQHSNIHTGMRPFKCNYCPRDFTNFPNWLKHTRRRHKVDHKTGEHLENIPSYCSKKSTTNKAQKAAAAAAAAAAASSAVNPNELSASSELKAKANLTSTAAPAPAKQARKKKQPQQATLAALGITLPAGTALQQVHPVPLAQQHQQELTTVLVPLAPPAPKQTKAKRERKQLAPKQLQQKPQLLQQGQPQQSSLEPIPAVPQIKKEPVQTQGPFLDLHGLSLTSAEELIMEQALEMEECGLYDAPNANTEMGTSDNAISDSAAALHFQIKNELPDELLPDDDFLPCKPSDRLPCPSLESSPFSSPASMELTAVSCASSVAISTNALPVRSGNYYLPAFTLNAHGKLSSTGNGVQSVTTSLAQTPSVSMVNVPLLVRSNQMLPSVDTLLFTNQTGGSRFFAGKSATAATPHLT.

Residues 1 to 17 (MEGGKGEGKRMKEEAPS) are compositionally biased toward basic and acidic residues. 2 disordered regions span residues 1-32 (MEGG…AGTP) and 134-165 (FSVT…TPVK). Residues 146–164 (AFTNSPFKKTSSSGTSTPV) show a composition bias toward polar residues. 8 consecutive C2H2-type zinc fingers follow at residues 269 to 293 (HKCL…AAAH), 299 to 321 (YRCS…LKTH), 331 to 352 (KKCP…RKIH), 358 to 380 (YQCD…ARIH), 386 to 408 (YECP…QKYH), 414 to 436 (YRCE…NLVH), 442 to 464 (FACT…SNIH), and 470 to 493 (FKCN…RRRH). Disordered regions lie at residues 554-573 (TSTA…QPQQ) and 617-652 (PKQT…SSLE). Positions 630–648 (APKQLQQKPQLLQQGQPQQ) are enriched in low complexity.

In terms of tissue distribution, distribution varies between nurse cells and the oocyte during oogenesis. Weakly expressed in follicle and border cells.

Its subcellular location is the nucleus. May belong to a complex set of multifingered proteins which play an important role in gene activation or regulation at early embryonic stages through a maximal accumulation of their transcripts (or protein product) in the mature oocyte. In Drosophila melanogaster (Fruit fly), this protein is Serendipity locus protein H-1 (wdn).